The following is a 433-amino-acid chain: Protein FAM98B (433 aa).

A disordered region spans residues 303–433 (GRVPDRGGRP…GGGGGGYRRY (131 aa)). The span at 305 to 314 (VPDRGGRPNE) shows a compositional bias: basic and acidic residues. Residues 331 to 433 (GGGGRGGWGG…GGGGGGYRRY (103 aa)) show a composition bias toward gly residues.

It belongs to the FAM98 family. Homodimer. Component of the tRNA-splicing ligase complex. Interacts with FAM98A. In terms of tissue distribution, expressed strongly in colorectal cancer tissues compared to wild-type colon samples (at protein level). Expressed strongly in colorectal cancer tissues compared to wild-type colon samples.

The protein localises to the nucleus. It is found in the cytoplasm. Functionally, positively stimulates PRMT1-induced protein arginine dimethylated arginine methylation. The sequence is that of Protein FAM98B (FAM98B) from Homo sapiens (Human).